The following is a 1058-amino-acid chain: UPF0507 protein YALI0E18612g (1058 aa).

The region spanning 252–394 is the VPS9 domain; that stretch reads TNEDGPLDQA…IGENREQLEA (143 aa).

This sequence belongs to the UPF0507 family.

The chain is UPF0507 protein YALI0E18612g from Yarrowia lipolytica (strain CLIB 122 / E 150) (Yeast).